A 136-amino-acid polypeptide reads, in one-letter code: Ubiquinol-cytochrome c reductase complex assembly factor 4 (136 aa).

The N-terminal stretch at 1 to 15 (MNSVLCSRAAGAVRA) is a signal peptide. Over 16–80 (LRLVGWASRS…GKPQQRPWWK (65 aa)) the chain is Mitochondrial matrix. Residues 26–58 (LHPPPRGRSPAQPADREEEDDDPNLPIQFSGSK) are disordered. Residues 81–97 (VLPLTLTLVALVVWCYQ) traverse the membrane as a helical segment. The Mitochondrial intermembrane segment spans residues 98–136 (REESGMDLWLRQVLEEEDEEEPEGPPEELEAPALYGART). The span at 112-127 (EEEDEEEPEGPPEELE) shows a compositional bias: acidic residues. Positions 112 to 136 (EEEDEEEPEGPPEELEAPALYGART) are disordered.

Belongs to the UQCC4 family. In terms of assembly, forms a complex, named COMB/coordinator of mitochondrial CYTB biogenesis, composed of UQCC1, UQCC2, UQCC4, UQCC5 and UQCC6; stabilizes nascent cytochrome b/MT-CYB and promotes its membrane insertion. Forms a complex, named COMA, composed of UQCC1, UQCC2 and UQCC4; activates MT-CYB translation. Forms a complex, named COMC, composed of UQCC1, UQCC2; UQCC3 and UQCC4; mediates MT-CYB hemylation and association with the first nuclear-encoded complex III subunit UQCRQ. Complexes COMA and COMB are bound to the mitochondrion inner membrane by UQCC4.

Its subcellular location is the mitochondrion inner membrane. In terms of biological role, required for the assembly and stability of the mitochondrial ubiquinol-cytochrome c reductase complex (complex III (CIII) or cytochrome b-c1 complex), a multisubunit transmembrane complex that is part of the mitochondrial electron transport chain (ETC) which drives oxidative phosphorylation. In Mus musculus (Mouse), this protein is Ubiquinol-cytochrome c reductase complex assembly factor 4 (Uqcc4).